A 79-amino-acid polypeptide reads, in one-letter code: Short neurotoxin 4 (79 aa).

A signal peptide spans 1–21 (MKTLLLTLVMVTIMCLDLGYT). 3 cysteine pairs are disulfide-bonded: C24–C41, C34–C59, and C63–C71.

The protein belongs to the three-finger toxin family. Short-chain subfamily. Type III alpha-neurotoxin sub-subfamily. As to expression, expressed by the venom gland.

The protein resides in the secreted. In terms of biological role, binds with high affinity to muscle nicotinic acetylcholine receptor (nAChR) and hinders acetylcholine binding to the receptor, thereby impairing neuromuscular transmission. Causes muscle paralysis, spasms and increased respiration. The chain is Short neurotoxin 4 from Pseudonaja textilis (Eastern brown snake).